The primary structure comprises 422 residues: Acylglycerol kinase, mitochondrial (422 aa).

The residue at position 6 (Lys-6) is an N6-acetyllysine. Residues 15–31 (TTAGLCLLTWGGHWLYG) are hydrophobic. Positions 58–199 (AQVKKATVFL…LDVLQIKGEK (142 aa)) constitute a DAGKc domain. A disordered region spans residues 249–271 (QASISYTGPTERPPNEPEETPVQ).

The protein belongs to the AGK family. As to quaternary structure, component of the TIM22 complex, which core is composed of TIMM22, associated with TIMM10 (TIMM10A and/or TIMM10B), TIMM9, AGK and TIMM29. Interacts with SMIM26. Mg(2+) is required as a cofactor. In terms of tissue distribution, highly expressed in muscle, heart, kidney and brain.

The protein localises to the mitochondrion inner membrane. It is found in the mitochondrion intermembrane space. It catalyses the reaction a monoacylglycerol + ATP = a monoacyl-sn-glycero-3-phosphate + ADP + H(+). The catalysed reaction is a 1,2-diacyl-sn-glycerol + ATP = a 1,2-diacyl-sn-glycero-3-phosphate + ADP + H(+). It carries out the reaction an N-acylsphing-4-enine + ATP = an N-acylsphing-4-enine 1-phosphate + ADP + H(+). The enzyme catalyses 1-(9Z-octadecenoyl)-sn-glycerol + ATP = 1-(9Z-octadecenoyl)-sn-glycero-3-phosphate + ADP + H(+). It catalyses the reaction 1,2-di-(9Z-octadecenoyl)-sn-glycerol + ATP = 1,2-di-(9Z-octadecenoyl)-sn-glycero-3-phosphate + ADP + H(+). The catalysed reaction is a 1-acyl-sn-glycerol + ATP = a 1-acyl-sn-glycero-3-phosphate + ADP + H(+). It carries out the reaction 1-hexadecanoyl-sn-glycerol + ATP = 1-hexadecanoyl-sn-glycero-3-phosphate + ADP + H(+). The enzyme catalyses a 2-acylglycerol + ATP = a 2-acyl-sn-glycerol 3-phosphate + ADP + H(+). It catalyses the reaction 2-(5Z,8Z,11Z,14Z-eicosatetraenoyl)-glycerol + ATP = 2-(5Z,8Z,11Z,14Z-eicosatetraenoyl)-sn-glycero-3-phosphate + ADP + H(+). The catalysed reaction is 1-(5Z,8Z,11Z,14Z-eicosatetraenoyl)-sn-glycerol + ATP = 1-(5Z,8Z,11Z,14Z-eicosatetraenoyl)-sn-glycero-3-phosphate + ADP + H(+). It carries out the reaction N-(hexanoyl)sphing-4-enine + ATP = N-hexanoylsphing-4-enine 1-phosphate + ADP + H(+). The protein operates within lipid metabolism; glycerolipid metabolism. Lipid kinase that can phosphorylate both monoacylglycerol and diacylglycerol to form lysophosphatidic acid (LPA) and phosphatidic acid (PA), respectively. Does not phosphorylate sphingosine. Phosphorylates ceramide. Phosphorylates 1,2-dioleoylglycerol more rapidly than 2,3-dioleoylglycerol. Independently of its lipid kinase activity, acts as a component of the TIM22 complex. The TIM22 complex mediates the import and insertion of multi-pass transmembrane proteins into the mitochondrial inner membrane by forming a twin-pore translocase that uses the membrane potential as the external driving force. In the TIM22 complex, required for the import of a subset of metabolite carriers into mitochondria, such as ANT1/SLC25A4 and SLC25A24, while it is not required for the import of TIMM23. Overexpression increases the formation and secretion of LPA, resulting in transactivation of EGFR and activation of the downstream MAPK signaling pathway, leading to increased cell growth. This chain is Acylglycerol kinase, mitochondrial, found in Homo sapiens (Human).